Here is a 534-residue protein sequence, read N- to C-terminus: MAKDLQVLTALDVAKTQLYHFTAIVIAGMGFFTDAYDLFCISLVTKLLGRIYYHHEGALKPGSLPPNVAAAVNGVAFCGTLAGQLFFGWLGDKLGRKKVYGMTLMLMVICSIASGLSFGHTPKSVMATLCFFRFWLGFGIGGDYPLSATIMSEYANKKTRGAFIAAVFAMQGFGILAGGMVAIIVSAAFKNQFPAPAYKDGALASTISQADFVWRIIVMFGAIPTALTYYWRMKMPETARYTALVAKNLKQATNDMSKVLQVEIEPEQEKVEEISQGNDFGLFTKQFLRRHGLHLLGTASTWFLLDIAFYSQNLFQKDIFSAIGWIPPAETMNALEEVYRIARAQTLIALCSTVPGYWFTVAFIDKIGRFAIQLMGFFFMTVFMFALAIPYTHWTHKDNRIGFVIMYSLTFFFANFGPNATTFVVPAEIFPARLRSTCHGISAAAGKAGAMVGAFGFLYAAQSTDPKKTDAGYPAGIGVRNSLIVLGCVNFLGMLFTLLVPESKGKSLEEMSRENEGEDENGTEMRASGRTVPV.

The Cytoplasmic segment spans residues 1-23 (MAKDLQVLTALDVAKTQLYHFTA). Residues 24–44 (IVIAGMGFFTDAYDLFCISLV) form a helical membrane-spanning segment. The Extracellular portion of the chain corresponds to 45–69 (TKLLGRIYYHHEGALKPGSLPPNVA). Residues 70 to 90 (AAVNGVAFCGTLAGQLFFGWL) form a helical membrane-spanning segment. At 91-98 (GDKLGRKK) the chain is on the cytoplasmic side. A helical membrane pass occupies residues 99–119 (VYGMTLMLMVICSIASGLSFG). Residues 120–124 (HTPKS) are Extracellular-facing. A helical membrane pass occupies residues 125–145 (VMATLCFFRFWLGFGIGGDYP). Over 146–163 (LSATIMSEYANKKTRGAF) the chain is Cytoplasmic. Residues 164 to 184 (IAAVFAMQGFGILAGGMVAII) form a helical membrane-spanning segment. Topologically, residues 185-210 (VSAAFKNQFPAPAYKDGALASTISQA) are extracellular. A helical membrane pass occupies residues 211 to 231 (DFVWRIIVMFGAIPTALTYYW). The Cytoplasmic portion of the chain corresponds to 232–290 (RMKMPETARYTALVAKNLKQATNDMSKVLQVEIEPEQEKVEEISQGNDFGLFTKQFLRR). The chain crosses the membrane as a helical span at residues 291 to 311 (HGLHLLGTASTWFLLDIAFYS). Topologically, residues 312 to 343 (QNLFQKDIFSAIGWIPPAETMNALEEVYRIAR) are extracellular. A helical membrane pass occupies residues 344-364 (AQTLIALCSTVPGYWFTVAFI). Residues 365 to 369 (DKIGR) are Cytoplasmic-facing. The helical transmembrane segment at 370–390 (FAIQLMGFFFMTVFMFALAIP) threads the bilayer. Topologically, residues 391 to 400 (YTHWTHKDNR) are extracellular. The helical transmembrane segment at 401–421 (IGFVIMYSLTFFFANFGPNAT) threads the bilayer. Residues 422–440 (TFVVPAEIFPARLRSTCHG) lie on the Cytoplasmic side of the membrane. Residues 441-461 (ISAAAGKAGAMVGAFGFLYAA) traverse the membrane as a helical segment. The Extracellular segment spans residues 462–481 (QSTDPKKTDAGYPAGIGVRN). A helical transmembrane segment spans residues 482–502 (SLIVLGCVNFLGMLFTLLVPE). At 503–534 (SKGKSLEEMSRENEGEDENGTEMRASGRTVPV) the chain is on the cytoplasmic side. Residues 507–534 (SLEEMSRENEGEDENGTEMRASGRTVPV) are disordered.

Belongs to the major facilitator superfamily. Phosphate:H(+) symporter (TC 2.A.1.9) family.

It is found in the cell membrane. It carries out the reaction phosphate(in) + H(+)(in) = phosphate(out) + H(+)(out). Its function is as follows. Low-affinity transporter for external inorganic phosphate (Pi). Involved in phosphorus (P) remobilization from dying to developing tissues during corolla senescence in an ethylene-dependent manner. The protein is Low affinity inorganic phosphate transporter 1 of Petunia hybrida (Petunia).